The primary structure comprises 1356 residues: Transmembrane protein 94 (1356 aa).

Residues methionine 1 to cysteine 64 are Cytoplasmic-facing. The chain crosses the membrane as a helical span at residues phenylalanine 65–glycine 85. At glycine 86 to arginine 92 the chain is on the lumenal side. Residues glycine 93–isoleucine 113 form a helical membrane-spanning segment. Over glycine 114–arginine 273 the chain is Cytoplasmic. Phosphoserine occurs at positions 221 and 225. Residues phenylalanine 274–isoleucine 294 form a helical membrane-spanning segment. The Lumenal portion of the chain corresponds to threonine 295–asparagine 320. The helical transmembrane segment at glycine 321–glycine 341 threads the bilayer. Residues glutamate 342–cysteine 1092 are Cytoplasmic-facing. The DKQGIL signature appears at aspartate 417–leucine 422. 2 disordered regions span residues valine 439–proline 461 and glutamate 483–proline 541. A compositionally biased stretch (basic and acidic residues) spans glutamate 440–leucine 449. 3 positions are modified to phosphoserine: serine 444, serine 445, and serine 454. Basic residues predominate over residues histidine 502–histidine 511. A phosphoserine mark is found at serine 513, serine 518, serine 798, and serine 941. The helical transmembrane segment at phenylalanine 1093–valine 1113 threads the bilayer. Over glutamine 1114 to serine 1120 the chain is Lumenal. Residues threonine 1121–glycine 1141 traverse the membrane as a helical segment. At lysine 1142–tyrosine 1167 the chain is on the cytoplasmic side. The chain crosses the membrane as a helical span at residues phenylalanine 1168–glycine 1188. Residues phenylalanine 1189–glycine 1228 lie on the Lumenal side of the membrane. Residues asparagine 1202 and asparagine 1205 are each glycosylated (N-linked (GlcNAc...) asparagine). Residues leucine 1229–isoleucine 1249 form a helical membrane-spanning segment. At threonine 1250 to lysine 1261 the chain is on the cytoplasmic side. The helical transmembrane segment at serine 1262–valine 1282 threads the bilayer. Residues glutamine 1283–proline 1306 are Lumenal-facing. The helical transmembrane segment at leucine 1307–valine 1327 threads the bilayer. Over lysine 1328 to phenylalanine 1356 the chain is Cytoplasmic. A GMN; metal-binding motif motif is present at residues glycine 1351 to asparagine 1353.

As to quaternary structure, forms homooligomers. In terms of tissue distribution, expressed ubiquitously.

It is found in the endoplasmic reticulum membrane. In terms of biological role, could function in the uptake of Mg(2+) from the cytosol into the endoplasmic reticulum and regulate intracellular Mg(2+) homeostasis. The protein is Transmembrane protein 94 of Homo sapiens (Human).